A 273-amino-acid chain; its full sequence is Light-independent protochlorophyllide reductase iron-sulfur ATP-binding protein (273 aa).

ATP-binding positions include glycine 12–threonine 17 and lysine 41. A Mg(2+)-binding site is contributed by serine 16. Residues cysteine 97 and cysteine 131 each contribute to the [4Fe-4S] cluster site. Asparagine 182–arginine 183 is an ATP binding site.

Belongs to the NifH/BchL/ChlL family. In terms of assembly, homodimer. Protochlorophyllide reductase is composed of three subunits; BchL, BchN and BchB. It depends on [4Fe-4S] cluster as a cofactor.

The enzyme catalyses chlorophyllide a + oxidized 2[4Fe-4S]-[ferredoxin] + 2 ADP + 2 phosphate = protochlorophyllide a + reduced 2[4Fe-4S]-[ferredoxin] + 2 ATP + 2 H2O. It participates in porphyrin-containing compound metabolism; bacteriochlorophyll biosynthesis (light-independent). In terms of biological role, component of the dark-operative protochlorophyllide reductase (DPOR) that uses Mg-ATP and reduced ferredoxin to reduce ring D of protochlorophyllide (Pchlide) to form chlorophyllide a (Chlide). This reaction is light-independent. The L component serves as a unique electron donor to the NB-component of the complex, and binds Mg-ATP. This Chloroflexus aurantiacus (strain ATCC 29364 / DSM 637 / Y-400-fl) protein is Light-independent protochlorophyllide reductase iron-sulfur ATP-binding protein.